Reading from the N-terminus, the 336-residue chain is Ornithine carbamoyltransferase, catabolic (336 aa).

Carbamoyl phosphate is bound by residues 62-65 (STRT), Gln-89, Arg-113, and 140-143 (HPTQ). L-ornithine is bound by residues Asn-172, Asp-236, and 240–241 (SM). Residues 277-278 (CL) and Arg-322 each bind carbamoyl phosphate.

It belongs to the aspartate/ornithine carbamoyltransferase superfamily. OTCase family.

The protein localises to the cytoplasm. It carries out the reaction carbamoyl phosphate + L-ornithine = L-citrulline + phosphate + H(+). It participates in amino-acid degradation; L-arginine degradation via ADI pathway; carbamoyl phosphate from L-arginine: step 2/2. Its function is as follows. Reversibly catalyzes the transfer of the carbamoyl group from carbamoyl phosphate (CP) to the N(epsilon) atom of ornithine (ORN) to produce L-citrulline. In Staphylococcus aureus (strain MRSA252), this protein is Ornithine carbamoyltransferase, catabolic.